Here is a 457-residue protein sequence, read N- to C-terminus: Acetylcholine receptor subunit alpha-1-A (457 aa).

The first 20 residues, 1–20 (MDFVLTRLILLFLAATIIYS), serve as a signal peptide directing secretion. Over 21-230 (SEDESRLIND…ITYHFLLQRL (210 aa)) the chain is Extracellular. Intrachain disulfides connect Cys-148–Cys-162 and Cys-212–Cys-213. Asn-161 carries an N-linked (GlcNAc...) asparagine glycan. 3 helical membrane passes run 231–255 (PLYFIVNVVIPCLLFSFLTGLVFYL), 263–281 (ITLSVSVLLSLVVFLLVIV), and 297–316 (YMLFTMVFVIASIVITVIVI). Residues 317 to 428 (NTHHRSPSTH…WKFVAMVLDH (112 aa)) lie on the Cytoplasmic side of the membrane. Residues 429 to 447 (LLLAVFMIVCIIGTLAIFA) traverse the membrane as a helical segment.

This sequence belongs to the ligand-gated ion channel (TC 1.A.9) family. Acetylcholine receptor (TC 1.A.9.1) subfamily. Alpha-1/CHRNA1 sub-subfamily. As to quaternary structure, one of the alpha chains that assemble within the acetylcholine receptor, a pentamer of two alpha chains, a beta, a delta, and a gamma or epsilon chains. In terms of tissue distribution, oocytes.

It is found in the postsynaptic cell membrane. It localises to the cell membrane. It carries out the reaction K(+)(in) = K(+)(out). The enzyme catalyses Na(+)(in) = Na(+)(out). Functionally, upon acetylcholine binding, the AChR responds by an extensive change in conformation that affects all subunits and leads to opening of an ion-conducting channel across the plasma membrane. The chain is Acetylcholine receptor subunit alpha-1-A (chrna1-a) from Xenopus laevis (African clawed frog).